A 468-amino-acid chain; its full sequence is MSSGKIAQVVGPVVDVVFASGDKLPEINNALIVYKNGDKSQKVVLEVALELGDGLVRTIAMESTDGLTRGLEVLDTGRAISVPVGKDTLGRVFNVLGDAIDLEEPFAEDAERQPIHKKAPSFDELSTSSEILETGIKVIDLLAPYLKGGKVGLFGGAGVGKTVLIQELIHNIAQEHGGISVFTGVGERTREGNDLYWEMKESGVIEKTAMVFGQMNEPPGARMRVALTGLTIAEYFRDVEGQDVLLFIDNIFRFTQAGSEVSALLGRMPSAVGYQPTLATEMGQLQERITSTKKGSVTSIQAIYVPADDYTDPAPATAFAHLDSTTNLERKLTQMGIYPAVDPLASSSRALTPEIVGDEHYEVATEVQRVLQRYRELQDIIAILGMDELSDEEKTLVGRARRIQFFLSQNFNVAETFTGQPGSYVPVEETVRGFKEILDGKHDQIPEDAFRMVGGIEDVIAKAEKMNY.

ATP is bound at residue 155–162 (GGAGVGKT).

It belongs to the ATPase alpha/beta chains family. In terms of assembly, F-type ATPases have 2 components, CF(1) - the catalytic core - and CF(0) - the membrane proton channel. CF(1) has five subunits: alpha(3), beta(3), gamma(1), delta(1), epsilon(1). CF(0) has three main subunits: a(1), b(2) and c(9-12). The alpha and beta chains form an alternating ring which encloses part of the gamma chain. CF(1) is attached to CF(0) by a central stalk formed by the gamma and epsilon chains, while a peripheral stalk is formed by the delta and b chains.

Its subcellular location is the cell membrane. The catalysed reaction is ATP + H2O + 4 H(+)(in) = ADP + phosphate + 5 H(+)(out). In terms of biological role, produces ATP from ADP in the presence of a proton gradient across the membrane. The catalytic sites are hosted primarily by the beta subunits. The protein is ATP synthase subunit beta of Streptococcus agalactiae serotype Ia (strain ATCC 27591 / A909 / CDC SS700).